A 403-amino-acid chain; its full sequence is Acetyl-CoA acetyltransferase 2 (403 aa).

Residue Cys97 is the Acyl-thioester intermediate of the active site. Position 237 (Lys237) interacts with CoA. Ala254 serves as a coordination point for K(+). CoA is bound at residue Ser258. Val355 contributes to the K(+) binding site. Residues His359 and Cys389 each act as proton acceptor in the active site.

The protein belongs to the thiolase-like superfamily. Thiolase family. In terms of tissue distribution, expressed in root tips, emerging leaves, young leaves, stems, and anthers at the microspore stage.

Its subcellular location is the cytoplasm. The protein localises to the peroxisome. It catalyses the reaction 2 acetyl-CoA = acetoacetyl-CoA + CoA. Its pathway is metabolic intermediate biosynthesis; (R)-mevalonate biosynthesis; (R)-mevalonate from acetyl-CoA: step 1/3. In terms of biological role, catalyzes the condensation of two molecules of acetyl-CoA to produce acetoacetyl-CoA. Generates the bulk of the acetoacetyl-CoA precursor required for the cytosol-localized, mevalonate-derived isoprenoid biosynthesis. The generated isoprenoids are required for normal growth and development. Essential protein during embryogenesis. The chain is Acetyl-CoA acetyltransferase 2 from Arabidopsis thaliana (Mouse-ear cress).